The chain runs to 396 residues: Period circadian protein (396 aa).

Disordered regions lie at residues 27 to 120 (VTAP…APPV), 167 to 188 (SGPG…WEGE), 253 to 275 (GGNG…QYTQ), and 333 to 362 (SPSS…TSQA). Gly residues predominate over residues 93–114 (GTSGTGNSGDGGGGGGANGTGS). A compositionally biased stretch (gly residues) spans 253 to 262 (GGNGNVGSGN). Residues 333-342 (SPSSTNTNPN) show a composition bias toward low complexity.

In terms of assembly, forms a heterodimer with timeless (TIM); the complex then translocates into the nucleus. Phosphorylated with a circadian rhythmicity, probably by the double-time protein (dbt). Phosphorylation could be implicated in the stability of per monomer and in the formation of heterodimer per-tim.

It localises to the nucleus. The protein localises to the cytoplasm. The protein resides in the perinuclear region. Its function is as follows. Essential for biological clock functions. Determines the period length of circadian and ultradian rhythms; an increase in PER dosage leads to shortened circadian rhythms and a decrease leads to lengthened circadian rhythms. Essential for the circadian rhythmicity of locomotor activity, eclosion behavior, and for the rhythmic component of the male courtship song that originates in the thoracic nervous system. The biological cycle depends on the rhythmic formation and nuclear localization of the TIM-PER complex. Light induces the degradation of TIM, which promotes elimination of PER. Nuclear activity of the heterodimer coordinatively regulates PER and TIM transcription through a negative feedback loop. Behaves as a negative element in circadian transcriptional loop. Does not appear to bind DNA, suggesting indirect transcriptional inhibition. The polypeptide is Period circadian protein (per) (Drosophila paulistorum (Fruit fly)).